Here is a 425-residue protein sequence, read N- to C-terminus: SWI/SNF and RSC complexes subunit ssr3 (425 aa).

Residues 1 to 16 (MSNNSRLPENGVQSGN) show a composition bias toward polar residues. Residues 1–23 (MSNNSRLPENGVQSGNGEDAELK) form a disordered region. Residues 201 to 278 (EHPERYKLSK…PELMNRFLEP (78 aa)) form the SWIB/MDM2 domain.

The protein belongs to the SMARCD family. In terms of assembly, component of the RSC complex composed of at least arp9, arp42, rsc1, rsc4, rsc7, rsc9, rsc58, sfh1, snf21, ssr1, ssr2, ssr3 and ssr4. The complex interacts with histone and histone variant components of centromeric chromatin. Component of the SWI/SNF global transcription activator complex composed of at least arp9, arp42, snf5, snf22, snf30, sbf59, sol1, ssr1, ssr2, ssr3, ssr4 and tfg3.

The protein localises to the cytoplasm. It localises to the nucleus. In terms of biological role, component of the chromatin structure remodeling complex (RSC), which is involved in transcription regulation and nucleosome positioning. Controls particularly membrane and organelle development genes. Part of the SWI/SNF complex, an ATP-dependent chromatin remodeling complex, required for the positive and negative regulation of gene expression of a large number of genes. It changes chromatin structure by altering DNA-histone contacts within a nucleosome, leading eventually to a change in nucleosome position, thus facilitating or repressing binding of gene-specific transcription factors. In Schizosaccharomyces pombe (strain 972 / ATCC 24843) (Fission yeast), this protein is SWI/SNF and RSC complexes subunit ssr3 (ssr3).